We begin with the raw amino-acid sequence, 161 residues long: Allophycocyanin beta chain (161 aa).

The residue at position 71 (N71) is an N4-methylasparagine. (2R,3E)-phycocyanobilin is bound at residue C81.

This sequence belongs to the phycobiliprotein family. As to quaternary structure, heterodimer of an alpha and a beta chain. In terms of processing, contains one covalently linked phycocyanobilin chromophore.

It localises to the cellular thylakoid membrane. In terms of biological role, light-harvesting photosynthetic bile pigment-protein from the phycobiliprotein complex. Allophycocyanin has a maximum absorption at approximately 650 nanometers. The sequence is that of Allophycocyanin beta chain (apcB) from Synechocystis sp. (strain ATCC 27184 / PCC 6803 / Kazusa).